The chain runs to 431 residues: 5-methylthioadenosine/S-adenosylhomocysteine deaminase (431 aa).

2 residues coordinate Zn(2+): His61 and His63. Substrate-binding residues include Glu90 and His183. Residue His210 coordinates Zn(2+). Substrate contacts are provided by Glu213 and Asp298. Zn(2+) is bound at residue Asp298.

This sequence belongs to the metallo-dependent hydrolases superfamily. MTA/SAH deaminase family. The cofactor is Zn(2+).

It catalyses the reaction S-adenosyl-L-homocysteine + H2O + H(+) = S-inosyl-L-homocysteine + NH4(+). The enzyme catalyses S-methyl-5'-thioadenosine + H2O + H(+) = S-methyl-5'-thioinosine + NH4(+). Catalyzes the deamination of 5-methylthioadenosine and S-adenosyl-L-homocysteine into 5-methylthioinosine and S-inosyl-L-homocysteine, respectively. Is also able to deaminate adenosine. The sequence is that of 5-methylthioadenosine/S-adenosylhomocysteine deaminase from Halobacterium salinarum (strain ATCC 700922 / JCM 11081 / NRC-1) (Halobacterium halobium).